The following is a 495-amino-acid chain: MGATATDIEKVPSAGTPDEPKAGETNVYVDTEAEKSFVRKVDFFVLPMLCLMYFFDCMDRSNLANAKTDGLEEDINLKGNEYSLLILLFYIPFGLFDLPWNLLIKRYSARIMLSLRRYAVTVVWGICALCQCAANNFGGLLAIRIILGVFEAGFFAGSTFYFTLFYTRNEMGFRLAVLQSFAVLASAFSGLISFGLFQINHSAVKGWQWLFIVEGAMTLIIGVIGFWWLPDTAQSAWFLTQRERDAASARLLRDTSAEIETKLELKAAFQTWSDWKFPIWAVITFSYPVAYATAMNFFPIIVARLGYSVVKTNLWTVAPNLVGAVVLLVVAKSSDIFRERSLHIIFSLTVSLVGMLILASIDVSHNKGVSYFACFLLASGAYIPTCLVHAWHNNNNTNENSRAANTGFFVGLGNIAGVLSAATFRTEYAPKYVPTLVATCACNGVCILATAFMGTWMRLENRRKDKEQGARIVAGQVETRMLADGEKSPEWRYFL.

The disordered stretch occupies residues M1–E24. 5 consecutive transmembrane segments (helical) span residues S36 to F55, L84 to I104, V123 to I143, I145 to F165, and V177 to F197. N200 carries N-linked (GlcNAc...) asparagine glycosylation. 5 helical membrane-spanning segments follow: residues W209–L229, V282–V302, L314–S334, S341–I361, and G368–V388. An N-linked (GlcNAc...) asparagine glycan is attached at N395. Helical transmembrane passes span A404–F424 and L436–W456.

The protein belongs to the major facilitator superfamily.

It localises to the cell membrane. Functionally, major facilitator-type transporter, part of the hnx cluster involved in the purine degradation. The nicotinate hydroxylase hnxS accepts nicotinate as a substrate and catalyzes the first step of nicotinate catabolism. The major facilitator-type transporters hxnP and hxnZ are probably involved in the uptake of nicotinate-derived metabolites, and the oxidoreductases hxnT and hxnY in the further metabolism of 6-OH nicotinic acid. In Emericella nidulans (strain FGSC A4 / ATCC 38163 / CBS 112.46 / NRRL 194 / M139) (Aspergillus nidulans), this protein is Major facilitator-type transporter hxnP.